The following is a 606-amino-acid chain: MTDAPVSRIRNFCIIAHIDHGKSTLADRLLQDTGTVANRDMQDQFLDNMDLERERGITIKLQAARMNYTAAHGEEYVLNLIDTPGHVDFSYEVSRSLQACEGALLVVDASQGVEAQTLANVYLALDNDLEIIPVLNKIDLPGADPDRIKEEVEAIIGLDCDNAIPCSAKTGLGVPEILQAVVDRVPPPKDAVEEPTKALIFDSYYDPYRGVIVYFRVMSGRINCKDKVLLMASKKTYELDEIGIMAPDQKKVDELHAGEVGYLAASIKAVADARVGDTITLVNAPADEALPGYTEAKPMVFCGLFPTEADQYPDLRDALDKLQLSDAALKYEPETSSAMGFGFRCGFLGLLHMEIVQERLEREYDLDLIVTAPSVIYKVNMIDGSEVMVDNPATLPDPQKRESIEEPYVRMEIYAPNEYNGALMGLCQERRGDYIDMKYITTDRVTLIYELPLAEVVTDFFDQMKTRTQGYASMEYSLIGYRKNQLVRLDVLINGERADALTTIVHQDKAYNVGKALVEKLKELIPRQQFKIPIQASIGSRIIASTSISAIRKDVLAKCYGGDISRKKKLLKKQAKGKKRMKAMGKVDVPQEAFMAVLKLNDGGGS.

The tr-type G domain occupies 7–189 (SRIRNFCIIA…AVVDRVPPPK (183 aa)). GTP is bound by residues 19-24 (DHGKST) and 136-139 (NKID).

This sequence belongs to the TRAFAC class translation factor GTPase superfamily. Classic translation factor GTPase family. LepA subfamily.

Its subcellular location is the cell inner membrane. It catalyses the reaction GTP + H2O = GDP + phosphate + H(+). Its function is as follows. Required for accurate and efficient protein synthesis under certain stress conditions. May act as a fidelity factor of the translation reaction, by catalyzing a one-codon backward translocation of tRNAs on improperly translocated ribosomes. Back-translocation proceeds from a post-translocation (POST) complex to a pre-translocation (PRE) complex, thus giving elongation factor G a second chance to translocate the tRNAs correctly. Binds to ribosomes in a GTP-dependent manner. The chain is Elongation factor 4 from Synechococcus sp. (strain CC9605).